A 345-amino-acid chain; its full sequence is Dimethyladenosine transferase 1, mitochondrial (345 aa).

A mitochondrion-targeting transit peptide spans M1–L27. S-adenosyl-L-methionine is bound by residues L38, G63, E85, K86, D111, V112, and N141.

Belongs to the class I-like SAM-binding methyltransferase superfamily. rRNA adenine N(6)-methyltransferase family. KsgA subfamily. Interacts with mitochondrial RNA polymerase POLRMT. Interacts with TFAM. Remains bound to the maturing mtSSU until the late stages of assembly. Ubiquitously expressed.

It is found in the mitochondrion. It carries out the reaction adenosine(N)/adenosine(N+1) in rRNA + 4 S-adenosyl-L-methionine = N(6)-dimethyladenosine(N)/N(6)-dimethyladenosine(N+1) in rRNA + 4 S-adenosyl-L-homocysteine + 4 H(+). Functionally, mitochondrial methyltransferase which uses S-adenosyl methionine to dimethylate two highly conserved adjacent adenosine residues (A1006 and A1007) within the loop of helix 45 at the 3-prime end of 12S rRNA, thereby regulating the assembly or stability of the small subunit of the mitochondrial ribosome. Also required for basal transcription of mitochondrial DNA, probably via its interaction with POLRMT and TFAM. Stimulates transcription independently of the methyltransferase activity. The polypeptide is Dimethyladenosine transferase 1, mitochondrial (Tfb1m) (Mus musculus (Mouse)).